We begin with the raw amino-acid sequence, 169 residues long: Cell division inhibitor SulA (169 aa).

A ftsZ binding region spans residues 106 to 112; that stretch reads ALRTGNY. Positions 162–169 are lon protease binding; that stretch reads KIHSNLYH.

It belongs to the SulA family. In terms of assembly, interacts with FtsZ. In terms of processing, is rapidly cleaved and degraded by the Lon protease once DNA damage is repaired.

Functionally, component of the SOS system and an inhibitor of cell division. Accumulation of SulA causes rapid cessation of cell division and the appearance of long, non-septate filaments. In the presence of GTP, binds a polymerization-competent form of FtsZ in a 1:1 ratio, thus inhibiting FtsZ polymerization and therefore preventing it from participating in the assembly of the Z ring. This mechanism prevents the premature segregation of damaged DNA to daughter cells during cell division. In Escherichia fergusonii (strain ATCC 35469 / DSM 13698 / CCUG 18766 / IAM 14443 / JCM 21226 / LMG 7866 / NBRC 102419 / NCTC 12128 / CDC 0568-73), this protein is Cell division inhibitor SulA.